The sequence spans 245 residues: Ribonuclease 3 (245 aa).

Positions 19–148 constitute an RNase III domain; that stretch reads FRAFQQKLGI…FIGALYLDQG (130 aa). Mg(2+) is bound at residue Glu61. Residue Asp65 is part of the active site. Mg(2+) is bound by residues Asp134 and Glu137. Glu137 is a catalytic residue. Residues 174–243 enclose the DRBM domain; that stretch reads DYKSQLQELI…AAEALRKLKE (70 aa).

This sequence belongs to the ribonuclease III family. As to quaternary structure, homodimer. Mg(2+) serves as cofactor.

Its subcellular location is the cytoplasm. It carries out the reaction Endonucleolytic cleavage to 5'-phosphomonoester.. Functionally, digests double-stranded RNA. Involved in the processing of primary rRNA transcript to yield the immediate precursors to the large and small rRNAs (23S and 16S). Processes some mRNAs, and tRNAs when they are encoded in the rRNA operon. Processes pre-crRNA and tracrRNA of type II CRISPR loci if present in the organism. In Bacillus cytotoxicus (strain DSM 22905 / CIP 110041 / 391-98 / NVH 391-98), this protein is Ribonuclease 3.